Here is a 443-residue protein sequence, read N- to C-terminus: Ribosomal protein uS12 methylthiotransferase RimO (443 aa).

Residues 5–115 enclose the MTTase N-terminal domain; sequence PNIGFISLGC…VMKHVHKYVP (111 aa). [4Fe-4S] cluster contacts are provided by cysteine 14, cysteine 50, cysteine 79, cysteine 147, cysteine 151, and cysteine 154. In terms of domain architecture, Radical SAM core spans 133–374; the sequence is LTPKHYAYLK…MQVQQRISAA (242 aa). In terms of domain architecture, TRAM spans 377-443; that stretch reads QQKVGKTLAV…ADEYDLWGTC (67 aa).

It belongs to the methylthiotransferase family. RimO subfamily. [4Fe-4S] cluster serves as cofactor.

It is found in the cytoplasm. It catalyses the reaction L-aspartate(89)-[ribosomal protein uS12]-hydrogen + (sulfur carrier)-SH + AH2 + 2 S-adenosyl-L-methionine = 3-methylsulfanyl-L-aspartate(89)-[ribosomal protein uS12]-hydrogen + (sulfur carrier)-H + 5'-deoxyadenosine + L-methionine + A + S-adenosyl-L-homocysteine + 2 H(+). In terms of biological role, catalyzes the methylthiolation of an aspartic acid residue of ribosomal protein uS12. This Actinobacillus pleuropneumoniae serotype 5b (strain L20) protein is Ribosomal protein uS12 methylthiotransferase RimO.